The sequence spans 160 residues: Transcription elongation factor GreA (160 aa).

A coiled-coil region spans residues Ser-49–Ala-75.

The protein belongs to the GreA/GreB family.

In terms of biological role, necessary for efficient RNA polymerase transcription elongation past template-encoded arresting sites. The arresting sites in DNA have the property of trapping a certain fraction of elongating RNA polymerases that pass through, resulting in locked ternary complexes. Cleavage of the nascent transcript by cleavage factors such as GreA or GreB allows the resumption of elongation from the new 3'terminus. GreA releases sequences of 2 to 3 nucleotides. The protein is Transcription elongation factor GreA of Clostridium beijerinckii (strain ATCC 51743 / NCIMB 8052) (Clostridium acetobutylicum).